The sequence spans 316 residues: ATP synthase gamma chain (316 aa).

This sequence belongs to the ATPase gamma chain family. F-type ATPases have 2 components, CF(1) - the catalytic core - and CF(0) - the membrane proton channel. CF(1) has five subunits: alpha(3), beta(3), gamma(1), delta(1), epsilon(1). CF(0) has three main subunits: a, b and c.

The protein resides in the cellular thylakoid membrane. In terms of biological role, produces ATP from ADP in the presence of a proton gradient across the membrane. The gamma chain is believed to be important in regulating ATPase activity and the flow of protons through the CF(0) complex. This chain is ATP synthase gamma chain, found in Prochlorococcus marinus (strain AS9601).